A 247-amino-acid polypeptide reads, in one-letter code: ATP synthase subunit a, chloroplastic (247 aa).

5 helical membrane-spanning segments follow: residues 38-58, 95-115, 134-154, 199-219, and 220-240; these read QVLITSWVVIAILLGSTILVV, VPFIGTLFLFIFVSNWSGALL, INTTVALALLTSVAYFYAGIS, LVVVVLVSLVPLVVPIPVMFL, and GLFTSGIQALIFATLAAAYIG.

This sequence belongs to the ATPase A chain family. As to quaternary structure, F-type ATPases have 2 components, CF(1) - the catalytic core - and CF(0) - the membrane proton channel. CF(1) has five subunits: alpha(3), beta(3), gamma(1), delta(1), epsilon(1). CF(0) has four main subunits: a, b, b' and c.

It localises to the plastid. The protein resides in the chloroplast thylakoid membrane. Its function is as follows. Key component of the proton channel; it plays a direct role in the translocation of protons across the membrane. This chain is ATP synthase subunit a, chloroplastic, found in Lotus japonicus (Lotus corniculatus var. japonicus).